A 125-amino-acid chain; its full sequence is Secreted RxLR effector protein RXLR-C13 (125 aa).

The signal sequence occupies residues 1–23 (MVNSLTFTLVVVCLVRSCDGVAA). Positions 43 to 73 (RVLQETATANDDVKKLSTSTKVDSKLNQEIK) match the RxLR-dEER motif. Asn-85 carries an N-linked (GlcNAc...) asparagine glycan. A helical transmembrane segment spans residues 106–123 (FFILATILLFPIAAYMVA).

It belongs to the RxLR effector family.

Its subcellular location is the secreted. The protein resides in the host endoplasmic reticulum membrane. Secreted effector that does not suppress pattern-triggered immunity (PTI) in plant host. The chain is Secreted RxLR effector protein RXLR-C13 from Plasmopara halstedii (Downy mildew of sunflower).